The primary structure comprises 368 residues: N-succinylamino acid racemase (368 aa).

2-succinylbenzoate contacts are provided by residues S135 and 161-163; that span reads KLK. The active-site Proton donor is the K163. D189 provides a ligand contact to Mg(2+). Residue N191 participates in 2-succinylbenzoate binding. Mg(2+) is bound by residues E214 and D239. K263 (proton acceptor) is an active-site residue. A 2-succinylbenzoate-binding site is contributed by I293.

This sequence belongs to the mandelate racemase/muconate lactonizing enzyme family. MenC type 2 subfamily. As to quaternary structure, homooctamer. It depends on a divalent metal cation as a cofactor.

It catalyses the reaction N-acetyl-D-methionine = N-acetyl-L-methionine. The enzyme catalyses (1R,6R)-6-hydroxy-2-succinyl-cyclohexa-2,4-diene-1-carboxylate = 2-succinylbenzoate + H2O. Its activity is regulated as follows. Inhibited by EDTA and sulfhydryl reagents such as p-chloromercuribenzoic acid. Both OSBS and NAAAR activities are inhibited competitively by salicylhydroxamate. Acts as a N-succinylamino acid racemase (NSAR) that catalyzes the racemization of N-succinyl-phenylglycine and N-succinyl-methionine. Can catalyze the racemization of a broad range of N-acylamino acids, including N-acetyl-D/L-methionine, N-propionyl-D/L-methionine, N-butyryl-D/L-methionine and N-chloroacetyl-L-valine. Also converts 2-succinyl-6-hydroxy-2,4-cyclohexadiene-1-carboxylate (SHCHC) to 2-succinylbenzoate (OSB). Catalyzes both N-succinylamino acid racemization and OSB synthesis at equivalent rates. NSAR is probably the biological function of this enzyme. The sequence is that of N-succinylamino acid racemase from Amycolatopsis sp.